The following is a 57-amino-acid chain: UPF0391 membrane protein IL0696 (57 aa).

2 consecutive transmembrane segments (helical) span residues 4-24 (WVLIFLAVAVVAAILGFGGIA) and 28-48 (AGIAKIIFYIFIILFAISLVV).

Belongs to the UPF0391 family.

The protein resides in the cell membrane. In Idiomarina loihiensis (strain ATCC BAA-735 / DSM 15497 / L2-TR), this protein is UPF0391 membrane protein IL0696.